Here is a 239-residue protein sequence, read N- to C-terminus: tRNA (guanine-N(1)-)-methyltransferase (239 aa).

S-adenosyl-L-methionine is bound by residues Gly-113 and 137–142 (LGDYVL).

It belongs to the RNA methyltransferase TrmD family. In terms of assembly, homodimer.

Its subcellular location is the cytoplasm. The catalysed reaction is guanosine(37) in tRNA + S-adenosyl-L-methionine = N(1)-methylguanosine(37) in tRNA + S-adenosyl-L-homocysteine + H(+). Functionally, specifically methylates guanosine-37 in various tRNAs. The sequence is that of tRNA (guanine-N(1)-)-methyltransferase from Cutibacterium acnes (strain DSM 16379 / KPA171202) (Propionibacterium acnes).